Consider the following 83-residue polypeptide: Protein MATERNALLY EXPRESSED GENE 3 (83 aa).

A signal peptide spans 1-22; sequence MQWLAFVAPRWRCVCDQELSAQ. Cys60 and Cys82 are disulfide-bonded.

It belongs to the MEG family. As to expression, expressed in endosperm, anther and pollen.

The polypeptide is Protein MATERNALLY EXPRESSED GENE 3 (MEG3) (Zea mays (Maize)).